The primary structure comprises 217 residues: Adenylate kinase (217 aa).

Residue 10–15 participates in ATP binding; it reads GGGKGT. Positions 30 to 59 are NMP; the sequence is STGDMLRAAVASGSEVGKKAKAVMDAGQLV. AMP is bound by residues Thr31, Arg36, 57–59, 85–88, and Gln92; these read QLV and GFPR. The LID stretch occupies residues 126–164; sequence GRYTCAKCGAGYHDKFQLPQVAGKCDSCGGTEFARRPDD. ATP is bound at residue Arg127. Cys130, Cys133, Cys150, and Cys153 together coordinate Zn(2+). 2 residues coordinate AMP: Arg161 and Arg172. Met200 is a binding site for ATP.

This sequence belongs to the adenylate kinase family. In terms of assembly, monomer.

It localises to the cytoplasm. It carries out the reaction AMP + ATP = 2 ADP. It participates in purine metabolism; AMP biosynthesis via salvage pathway; AMP from ADP: step 1/1. Functionally, catalyzes the reversible transfer of the terminal phosphate group between ATP and AMP. Plays an important role in cellular energy homeostasis and in adenine nucleotide metabolism. This chain is Adenylate kinase, found in Paramagnetospirillum magneticum (strain ATCC 700264 / AMB-1) (Magnetospirillum magneticum).